The sequence spans 116 residues: NADH-ubiquinone oxidoreductase chain 3 (116 aa).

The next 3 helical transmembrane spans lie at 3 to 23 (LLMTIITITALLSTILAIVSF), 56 to 76 (FFLIAILFLLFDLEIALLLPL), and 85 to 105 (PLLTFTWATAVLFLLTLGLIY).

It belongs to the complex I subunit 3 family.

The protein resides in the mitochondrion membrane. It catalyses the reaction a ubiquinone + NADH + 5 H(+)(in) = a ubiquinol + NAD(+) + 4 H(+)(out). Its function is as follows. Core subunit of the mitochondrial membrane respiratory chain NADH dehydrogenase (Complex I) that is believed to belong to the minimal assembly required for catalysis. Complex I functions in the transfer of electrons from NADH to the respiratory chain. The immediate electron acceptor for the enzyme is believed to be ubiquinone. This chain is NADH-ubiquinone oxidoreductase chain 3 (MT-ND3), found in Paralichthys olivaceus (Bastard halibut).